The chain runs to 207 residues: 3-isopropylmalate dehydratase small subunit (207 aa).

Belongs to the LeuD family. LeuD type 1 subfamily. In terms of assembly, heterodimer of LeuC and LeuD.

The catalysed reaction is (2R,3S)-3-isopropylmalate = (2S)-2-isopropylmalate. Its pathway is amino-acid biosynthesis; L-leucine biosynthesis; L-leucine from 3-methyl-2-oxobutanoate: step 2/4. Catalyzes the isomerization between 2-isopropylmalate and 3-isopropylmalate, via the formation of 2-isopropylmaleate. In Gluconacetobacter diazotrophicus (strain ATCC 49037 / DSM 5601 / CCUG 37298 / CIP 103539 / LMG 7603 / PAl5), this protein is 3-isopropylmalate dehydratase small subunit.